A 186-amino-acid chain; its full sequence is MGLKADNWIRKMALERKMIEPFCEANIGKGVVSYGLSSYGYDIRVGREFKIFTNVNSTVVDPKNFVEENVVDFEGDVCIVPANSFALARTIEYFKMPDDVLAICLGKSTYARCGIIVNVTPFEPGFEGHITIEISNTTPLPAKIYANEGIAQVLFLQGDEKCDTTYKDKKGKYQAQTGITLPRILK.

107–112 (KSTYAR) contacts dCTP. Residue Glu133 is the Proton donor/acceptor of the active site. DCTP is bound by residues Gln152, Tyr166, and Gln176.

The protein belongs to the dCTP deaminase family. Homotrimer.

The catalysed reaction is dCTP + H2O + H(+) = dUTP + NH4(+). It functions in the pathway pyrimidine metabolism; dUMP biosynthesis; dUMP from dCTP (dUTP route): step 1/2. Catalyzes the deamination of dCTP to dUTP. The polypeptide is dCTP deaminase (Campylobacter jejuni subsp. jejuni serotype O:6 (strain 81116 / NCTC 11828)).